Here is a 289-residue protein sequence, read N- to C-terminus: Ribosomal RNA small subunit methyltransferase A (289 aa).

Asparagine 28, leucine 30, glycine 55, glutamate 77, aspartate 103, and asparagine 122 together coordinate S-adenosyl-L-methionine.

Belongs to the class I-like SAM-binding methyltransferase superfamily. rRNA adenine N(6)-methyltransferase family. RsmA subfamily.

The protein localises to the cytoplasm. It catalyses the reaction adenosine(1518)/adenosine(1519) in 16S rRNA + 4 S-adenosyl-L-methionine = N(6)-dimethyladenosine(1518)/N(6)-dimethyladenosine(1519) in 16S rRNA + 4 S-adenosyl-L-homocysteine + 4 H(+). Specifically dimethylates two adjacent adenosines (A1518 and A1519) in the loop of a conserved hairpin near the 3'-end of 16S rRNA in the 30S particle. May play a critical role in biogenesis of 30S subunits. The sequence is that of Ribosomal RNA small subunit methyltransferase A from Jannaschia sp. (strain CCS1).